A 184-amino-acid chain; its full sequence is Large ribosomal subunit protein uL15 (184 aa).

Residues M1 to K62 are disordered. Gly residues predominate over residues R21–N35.

This sequence belongs to the universal ribosomal protein uL15 family. In terms of assembly, part of the 50S ribosomal subunit.

In terms of biological role, binds to the 23S rRNA. The protein is Large ribosomal subunit protein uL15 of Chlorobaculum parvum (strain DSM 263 / NCIMB 8327) (Chlorobium vibrioforme subsp. thiosulfatophilum).